The primary structure comprises 457 residues: uncharacterized protein (457 aa).

14 helical membrane passes run 15–35 (YGAI…GAIA), 54–74 (IWVV…FSFL), 87–107 (GLVV…LQML), 112–132 (VIQG…IRLI), 144–164 (INSF…AAIL), 166–186 (IASW…ALLL), 205–225 (LPSA…LSGF), 229–249 (QSLT…IFFI), 269–289 (LFSL…LAMV), 308–328 (LLLT…GYLI), 334–354 (GLLG…LVLL), 357–377 (SPAD…FGLF), 400–420 (MLGT…ALML), and 428–448 (THVS…VSGL).

The protein belongs to the major facilitator superfamily. TCR/Tet family.

Its subcellular location is the cell inner membrane. This is an uncharacterized protein from Escherichia coli (strain K12).